Here is a 217-residue protein sequence, read N- to C-terminus: Uracil-DNA glycosylase (217 aa).

D62 (proton acceptor) is an active-site residue.

It belongs to the uracil-DNA glycosylase (UDG) superfamily. UNG family.

It localises to the cytoplasm. The catalysed reaction is Hydrolyzes single-stranded DNA or mismatched double-stranded DNA and polynucleotides, releasing free uracil.. Its function is as follows. Excises uracil residues from the DNA which can arise as a result of misincorporation of dUMP residues by DNA polymerase or due to deamination of cytosine. The chain is Uracil-DNA glycosylase from Streptococcus pyogenes serotype M28 (strain MGAS6180).